Reading from the N-terminus, the 476-residue chain is Siroheme synthase (476 aa).

A precorrin-2 dehydrogenase /sirohydrochlorin ferrochelatase region spans residues 1–207 (MTANVLFPLF…QRHAEAEAVL (207 aa)). NAD(+)-binding positions include 25 to 26 (KV) and 46 to 47 (PS). At serine 132 the chain carries Phosphoserine. Residues 220 to 476 (GSVTLVGAGA…SAPCPPALIL (257 aa)) are uroporphyrinogen-III C-methyltransferase. Catalysis depends on aspartate 252, which acts as the Proton acceptor. Lysine 274 serves as the catalytic Proton donor. S-adenosyl-L-methionine contacts are provided by residues 305-307 (GGD), valine 310, 335-336 (TA), methionine 387, and glycine 416.

In the N-terminal section; belongs to the precorrin-2 dehydrogenase / sirohydrochlorin ferrochelatase family. The protein in the C-terminal section; belongs to the precorrin methyltransferase family.

The enzyme catalyses uroporphyrinogen III + 2 S-adenosyl-L-methionine = precorrin-2 + 2 S-adenosyl-L-homocysteine + H(+). It carries out the reaction precorrin-2 + NAD(+) = sirohydrochlorin + NADH + 2 H(+). The catalysed reaction is siroheme + 2 H(+) = sirohydrochlorin + Fe(2+). The protein operates within cofactor biosynthesis; adenosylcobalamin biosynthesis; precorrin-2 from uroporphyrinogen III: step 1/1. It functions in the pathway cofactor biosynthesis; adenosylcobalamin biosynthesis; sirohydrochlorin from precorrin-2: step 1/1. Its pathway is porphyrin-containing compound metabolism; siroheme biosynthesis; precorrin-2 from uroporphyrinogen III: step 1/1. It participates in porphyrin-containing compound metabolism; siroheme biosynthesis; siroheme from sirohydrochlorin: step 1/1. The protein operates within porphyrin-containing compound metabolism; siroheme biosynthesis; sirohydrochlorin from precorrin-2: step 1/1. Multifunctional enzyme that catalyzes the SAM-dependent methylations of uroporphyrinogen III at position C-2 and C-7 to form precorrin-2 via precorrin-1. Then it catalyzes the NAD-dependent ring dehydrogenation of precorrin-2 to yield sirohydrochlorin. Finally, it catalyzes the ferrochelation of sirohydrochlorin to yield siroheme. The protein is Siroheme synthase of Xylella fastidiosa (strain 9a5c).